The following is a 66-amino-acid chain: Putative alpha-neurotoxin RjAa13 (66 aa).

An LCN-type CS-alpha/beta domain is found at 1–60 (KEGYPVDWGNCKYECMSDAYCKDLCVDRKAKSGYCYKLNWSCYCEGLPDDSPIKTNGHCR). 4 disulfides stabilise this stretch: Cys-11-Cys-59, Cys-15-Cys-35, Cys-21-Cys-42, and Cys-25-Cys-44.

It belongs to the long (4 C-C) scorpion toxin superfamily. Sodium channel inhibitor family. Alpha subfamily. Expressed by the venom gland.

Its subcellular location is the secreted. Functionally, alpha toxins bind voltage-independently at site-3 of sodium channels (Nav) and inhibits the inactivation of the activated channels, thereby blocking neuronal transmission. This Rhopalurus junceus (Caribbean blue scorpion) protein is Putative alpha-neurotoxin RjAa13.